The sequence spans 285 residues: ATP phosphoribosyltransferase (285 aa).

It belongs to the ATP phosphoribosyltransferase family. Long subfamily. It depends on Mg(2+) as a cofactor.

It localises to the cytoplasm. The enzyme catalyses 1-(5-phospho-beta-D-ribosyl)-ATP + diphosphate = 5-phospho-alpha-D-ribose 1-diphosphate + ATP. The protein operates within amino-acid biosynthesis; L-histidine biosynthesis; L-histidine from 5-phospho-alpha-D-ribose 1-diphosphate: step 1/9. With respect to regulation, feedback inhibited by histidine. Catalyzes the condensation of ATP and 5-phosphoribose 1-diphosphate to form N'-(5'-phosphoribosyl)-ATP (PR-ATP). Has a crucial role in the pathway because the rate of histidine biosynthesis seems to be controlled primarily by regulation of HisG enzymatic activity. In Methanocella arvoryzae (strain DSM 22066 / NBRC 105507 / MRE50), this protein is ATP phosphoribosyltransferase.